The sequence spans 117 residues: uncharacterized protein (117 aa).

The next 2 helical transmembrane spans lie at 43–63 and 73–93; these read APIM…LMLL and AVQH…VFIV.

The protein localises to the cell membrane. This is an uncharacterized protein from Bacillus subtilis (strain 168).